The following is a 486-amino-acid chain: Membrane-bound lytic murein transglycosylase F (486 aa).

The signal sequence occupies residues 1-21 (MTRIKLSYFTIGLVALLLALA). The interval 22–268 (LWPNIPWRNG…RLEEKYLGHV (247 aa)) is non-LT domain. The tract at residues 269 to 486 (GSFDYVDTKT…VVGPGWSIGD (218 aa)) is LT domain. The active site involves Glu313.

This sequence in the N-terminal section; belongs to the bacterial solute-binding protein 3 family. It in the C-terminal section; belongs to the transglycosylase Slt family.

It is found in the cell outer membrane. It carries out the reaction Exolytic cleavage of the (1-&gt;4)-beta-glycosidic linkage between N-acetylmuramic acid (MurNAc) and N-acetylglucosamine (GlcNAc) residues in peptidoglycan, from either the reducing or the non-reducing ends of the peptidoglycan chains, with concomitant formation of a 1,6-anhydrobond in the MurNAc residue.. Its function is as follows. Murein-degrading enzyme that degrades murein glycan strands and insoluble, high-molecular weight murein sacculi, with the concomitant formation of a 1,6-anhydromuramoyl product. Lytic transglycosylases (LTs) play an integral role in the metabolism of the peptidoglycan (PG) sacculus. Their lytic action creates space within the PG sacculus to allow for its expansion as well as for the insertion of various structures such as secretion systems and flagella. The polypeptide is Membrane-bound lytic murein transglycosylase F (Yersinia pestis bv. Antiqua (strain Antiqua)).